Reading from the N-terminus, the 516-residue chain is D-aminopeptidase (516 aa).

Ser-61 functions as the Nucleophile in the catalytic mechanism. Lys-64 acts as the Proton donor/acceptor in catalysis. An important for specificity region spans residues 476–486 (RRSMDAPAPGD). Asp-480 is a binding site for substrate.

The protein belongs to the peptidase S12 family. As to quaternary structure, homodimer.

It catalyses the reaction Release of an N-terminal D-amino acid from a peptide, Xaa-|-Yaa-, in which Xaa is preferably D-Ala, D-Ser or D-Thr. D-amino acid amides and methyl esters also are hydrolyzed, as is glycine amide.. Its activity is regulated as follows. Inhibited by beta-lactam compounds such as 6-aminopenicillic acid, 7-aminocephalosporanic acid, benzylpenicillin and ampicillin. Inhibited by p-chloromercuribenzoate. Functionally, hydrolyzes N-terminal residues in D-amino acid-containing peptides. This Cereibacter sphaeroides (strain KD131 / KCTC 12085) (Rhodobacter sphaeroides) protein is D-aminopeptidase.